The chain runs to 137 residues: Large ribosomal subunit protein uL16 (137 aa).

It belongs to the universal ribosomal protein uL16 family. Part of the 50S ribosomal subunit.

Its function is as follows. Binds 23S rRNA and is also seen to make contacts with the A and possibly P site tRNAs. The chain is Large ribosomal subunit protein uL16 from Streptococcus thermophilus (strain ATCC BAA-491 / LMD-9).